Here is a 506-residue protein sequence, read N- to C-terminus: Bifunctional purine biosynthesis protein PurH (506 aa).

The region spanning 1–142 is the MGS-like domain; it reads MRAIISVYRK…KNFFRVVILV (142 aa).

This sequence belongs to the PurH family.

It catalyses the reaction (6R)-10-formyltetrahydrofolate + 5-amino-1-(5-phospho-beta-D-ribosyl)imidazole-4-carboxamide = 5-formamido-1-(5-phospho-D-ribosyl)imidazole-4-carboxamide + (6S)-5,6,7,8-tetrahydrofolate. It carries out the reaction IMP + H2O = 5-formamido-1-(5-phospho-D-ribosyl)imidazole-4-carboxamide. It participates in purine metabolism; IMP biosynthesis via de novo pathway; 5-formamido-1-(5-phospho-D-ribosyl)imidazole-4-carboxamide from 5-amino-1-(5-phospho-D-ribosyl)imidazole-4-carboxamide (10-formyl THF route): step 1/1. Its pathway is purine metabolism; IMP biosynthesis via de novo pathway; IMP from 5-formamido-1-(5-phospho-D-ribosyl)imidazole-4-carboxamide: step 1/1. The polypeptide is Bifunctional purine biosynthesis protein PurH (Aquifex aeolicus (strain VF5)).